We begin with the raw amino-acid sequence, 41 residues long: Cytochrome b559 subunit beta (41 aa).

The chain crosses the membrane as a helical span at residues 16-32 (WLAIHALAVPTVFFLGS). H20 is a binding site for heme.

Belongs to the PsbE/PsbF family. As to quaternary structure, heterodimer of an alpha subunit and a beta subunit. PSII is composed of 1 copy each of membrane proteins PsbA, PsbB, PsbC, PsbD, PsbE, PsbF, PsbH, PsbI, PsbJ, PsbK, PsbL, PsbM, PsbT, PsbX, PsbY, PsbZ, Psb30/Ycf12, at least 3 peripheral proteins of the oxygen-evolving complex and a large number of cofactors. It forms dimeric complexes. Requires heme b as cofactor.

It is found in the plastid. Its subcellular location is the chloroplast thylakoid membrane. Functionally, this b-type cytochrome is tightly associated with the reaction center of photosystem II (PSII). PSII is a light-driven water:plastoquinone oxidoreductase that uses light energy to abstract electrons from H(2)O, generating O(2) and a proton gradient subsequently used for ATP formation. It consists of a core antenna complex that captures photons, and an electron transfer chain that converts photonic excitation into a charge separation. The polypeptide is Cytochrome b559 subunit beta (Oltmannsiellopsis viridis (Marine flagellate)).